Reading from the N-terminus, the 966-residue chain is Glycine dehydrogenase (decarboxylating) (966 aa).

Lys-713 carries the post-translational modification N6-(pyridoxal phosphate)lysine.

Belongs to the GcvP family. In terms of assembly, the glycine cleavage system is composed of four proteins: P, T, L and H. Requires pyridoxal 5'-phosphate as cofactor.

It carries out the reaction N(6)-[(R)-lipoyl]-L-lysyl-[glycine-cleavage complex H protein] + glycine + H(+) = N(6)-[(R)-S(8)-aminomethyldihydrolipoyl]-L-lysyl-[glycine-cleavage complex H protein] + CO2. In terms of biological role, the glycine cleavage system catalyzes the degradation of glycine. The P protein binds the alpha-amino group of glycine through its pyridoxal phosphate cofactor; CO(2) is released and the remaining methylamine moiety is then transferred to the lipoamide cofactor of the H protein. The protein is Glycine dehydrogenase (decarboxylating) of Shewanella halifaxensis (strain HAW-EB4).